We begin with the raw amino-acid sequence, 139 residues long: Translation initiation factor 2 subunit beta (139 aa).

It belongs to the eIF-2-beta/eIF-5 family. Heterotrimer composed of an alpha, a beta and a gamma chain.

EIF-2 functions in the early steps of protein synthesis by forming a ternary complex with GTP and initiator tRNA. In Sulfurisphaera tokodaii (strain DSM 16993 / JCM 10545 / NBRC 100140 / 7) (Sulfolobus tokodaii), this protein is Translation initiation factor 2 subunit beta.